We begin with the raw amino-acid sequence, 130 residues long: Small ribosomal subunit protein uS8 (130 aa).

Belongs to the universal ribosomal protein uS8 family. Part of the 30S ribosomal subunit.

One of the primary rRNA binding proteins, it binds directly to 16S rRNA central domain where it helps coordinate assembly of the platform of the 30S subunit. This is Small ribosomal subunit protein uS8 from Korarchaeum cryptofilum (strain OPF8).